The following is a 164-amino-acid chain: Histone H1 (164 aa).

The span at 1 to 10 (MAPRSSTSKS) shows a compositional bias: polar residues. The segment at 1-164 (MAPRSSTSKS…KKSSKPAKKN (164 aa)) is disordered. The span at 16–27 (KDHKKAPIKKAI) shows a compositional bias: basic residues. Thr47 and Thr54 each carry phosphothreonine. Basic and acidic residues-rich tracts occupy residues 49 to 61 (VKKDVTPVKADTK), 69 to 89 (TMKETVSDAKKTVHAAAGDKK), and 117 to 156 (TKKEVKKDNKTAKKETKKDHKPAKKEAKKETKPAKKDAKK).

In terms of processing, cell-growth/division-associated phosphorylation by a CDC2-like kinase.

The protein resides in the nucleus. It is found in the chromosome. Histones H1 are necessary for the condensation of nucleosome chains into higher-order structures. The sequence is that of Histone H1 (HHO) from Tetrahymena thermophila (strain SB210).